A 285-amino-acid chain; its full sequence is Glutamate racemase (285 aa).

Substrate contacts are provided by residues 28–29 (DS) and 60–61 (YG). The active-site Proton donor/acceptor is the C92. 93-94 (NT) contacts substrate. UDP-N-acetyl-alpha-D-muramoyl-L-alanine contacts are provided by residues R104 and 113-119 (GVVPAIK). Catalysis depends on C204, which acts as the Proton donor/acceptor. Residue 205–206 (TH) coordinates substrate.

This sequence belongs to the aspartate/glutamate racemases family. In terms of assembly, monomer.

The enzyme catalyses L-glutamate = D-glutamate. The protein operates within cell wall biogenesis; peptidoglycan biosynthesis. Its activity is regulated as follows. The low basal catalytic activity in increased 1000-fold in the presence of UDP-MurNAc-L-Ala, the product of the preceding enzyme in the peptidoglycan biosynthesis. Its function is as follows. Provides the (R)-glutamate required for cell wall biosynthesis. This Escherichia coli (strain K12) protein is Glutamate racemase.